A 447-amino-acid chain; its full sequence is tRNA (guanine(37)-N(1))-methyltransferase (447 aa).

Residues H241, 285 to 286 (DL), and 313 to 314 (DV) contribute to the S-adenosyl-L-methionine site.

It belongs to the class I-like SAM-binding methyltransferase superfamily. TRM5/TYW2 family. In terms of assembly, monomer.

The protein localises to the mitochondrion matrix. The protein resides in the nucleus. It is found in the cytoplasm. The enzyme catalyses guanosine(37) in tRNA + S-adenosyl-L-methionine = N(1)-methylguanosine(37) in tRNA + S-adenosyl-L-homocysteine + H(+). Functionally, specifically methylates the N1 position of guanosine-37 in various cytoplasmic and mitochondrial tRNAs. Methylation is not dependent on the nature of the nucleoside 5' of the target nucleoside. This is the first step in the biosynthesis of wybutosine (yW), a modified base adjacent to the anticodon of tRNAs and required for accurate decoding. The chain is tRNA (guanine(37)-N(1))-methyltransferase from Giardia intestinalis (strain ATCC 50803 / WB clone C6) (Giardia lamblia).